A 156-amino-acid chain; its full sequence is Small ribosomal subunit protein uS7 (156 aa).

Belongs to the universal ribosomal protein uS7 family. In terms of assembly, part of the 30S ribosomal subunit. Contacts proteins S9 and S11.

In terms of biological role, one of the primary rRNA binding proteins, it binds directly to 16S rRNA where it nucleates assembly of the head domain of the 30S subunit. Is located at the subunit interface close to the decoding center, probably blocks exit of the E-site tRNA. The chain is Small ribosomal subunit protein uS7 from Mycobacterium avium (strain 104).